The following is a 288-amino-acid chain: MPIVFEAVSHIYQPGTPFAWKALDDVSLTIPDGEFWGIIGPTGSGKSTLIQHMNGLLRPTTGRVLVDGLDLSDRKTDLRKVRQRVGLVFQYPEHQLFGETIFEDVAFGPRNMQLGAAEVERRVMTALERVGLDPAMKDRSPFGLSGGQARRVALAGVLAMEPRVLILDEPTAGLDPQGRREILDLVGGFARTGMTVVLVSHSMDDVAEYADRVLVMHRGRVHMLGTPWELFARRAELEAIGLGVPAAVALADKLRERGWSIPPDVVTMDEAVAAIRGVLAGRKGADRP.

One can recognise an ABC transporter domain in the interval 3-243 (IVFEAVSHIY…RAELEAIGLG (241 aa)). Position 40 to 47 (40 to 47 (GPTGSGKS)) interacts with ATP.

Belongs to the ABC transporter superfamily. Energy-coupling factor EcfA family. Forms a stable energy-coupling factor (ECF) transporter complex composed of 2 membrane-embedded substrate-binding proteins (S component), 2 ATP-binding proteins (A component) and 2 transmembrane proteins (T component).

It localises to the cell membrane. Its function is as follows. ATP-binding (A) component of a common energy-coupling factor (ECF) ABC-transporter complex. Unlike classic ABC transporters this ECF transporter provides the energy necessary to transport a number of different substrates. In Symbiobacterium thermophilum (strain DSM 24528 / JCM 14929 / IAM 14863 / T), this protein is Energy-coupling factor transporter ATP-binding protein EcfA2.